The following is an 85-amino-acid chain: UPF0291 protein SP_1473 (85 aa).

The tract at residues 62–85 (TPEKLRQVQREKGLHGRSLDDPNS) is disordered.

Belongs to the UPF0291 family.

It localises to the cytoplasm. This is UPF0291 protein SP_1473 from Streptococcus pneumoniae serotype 4 (strain ATCC BAA-334 / TIGR4).